A 254-amino-acid polypeptide reads, in one-letter code: 5'/3'-nucleotidase SurE (254 aa).

The a divalent metal cation site is built by Asp9, Asp10, Ser40, and Asn93.

Belongs to the SurE nucleotidase family. Requires a divalent metal cation as cofactor.

The protein resides in the cytoplasm. It carries out the reaction a ribonucleoside 5'-phosphate + H2O = a ribonucleoside + phosphate. The enzyme catalyses a ribonucleoside 3'-phosphate + H2O = a ribonucleoside + phosphate. It catalyses the reaction [phosphate](n) + H2O = [phosphate](n-1) + phosphate + H(+). Its function is as follows. Nucleotidase with a broad substrate specificity as it can dephosphorylate various ribo- and deoxyribonucleoside 5'-monophosphates and ribonucleoside 3'-monophosphates with highest affinity to 3'-AMP. Also hydrolyzes polyphosphate (exopolyphosphatase activity) with the preference for short-chain-length substrates (P20-25). Might be involved in the regulation of dNTP and NTP pools, and in the turnover of 3'-mononucleotides produced by numerous intracellular RNases (T1, T2, and F) during the degradation of various RNAs. This Proteus mirabilis (strain HI4320) protein is 5'/3'-nucleotidase SurE.